Consider the following 94-residue polypeptide: MGRSLKKGPYCDPKLLKKIEELNAKGEKRVIKTWSRRSTIFPQMVGHTIAVYDGRKHVPVYITEEMVGHKLGEFAPTRTFRGHGDHTERSTALK.

This sequence belongs to the universal ribosomal protein uS19 family.

Its function is as follows. Protein S19 forms a complex with S13 that binds strongly to the 16S ribosomal RNA. This is Small ribosomal subunit protein uS19 from Carboxydothermus hydrogenoformans (strain ATCC BAA-161 / DSM 6008 / Z-2901).